The primary structure comprises 250 residues: Proteasome subunit alpha type-4-1 (250 aa).

This sequence belongs to the peptidase T1A family. In terms of assembly, the 26S proteasome consists of a 20S proteasome core and two 19S regulatory subunits. The 20S proteasome core is composed of 28 subunits that are arranged in four stacked rings, resulting in a barrel-shaped structure. The two end rings are each formed by seven alpha subunits, and the two central rings are each formed by seven beta subunits. The catalytic chamber with the active sites is on the inside of the barrel.

It is found in the cytoplasm. It localises to the nucleus. Functionally, the proteasome is a multicatalytic proteinase complex which is characterized by its ability to cleave peptides with Arg, Phe, Tyr, Leu, and Glu adjacent to the leaving group at neutral or slightly basic pH. The proteasome has an ATP-dependent proteolytic activity. This is Proteasome subunit alpha type-4-1 from Oryza sativa subsp. indica (Rice).